A 40-amino-acid chain; its full sequence is Metallothionein-1 (40 aa).

Belongs to the metallothionein superfamily. Type 5 family.

This protein binds cations of several transition elements. It is thought to be involved in detoxification processes. The polypeptide is Metallothionein-1 (MtnA) (Drosophila ananassae (Fruit fly)).